The following is a 404-amino-acid chain: uncharacterized protein (404 aa).

Transmembrane regions (helical) follow at residues 15–35, 43–63, 84–104, 121–141, 154–174, 187–207, 231–251, 279–299, 316–336, 338–358, and 373–393; these read WSLL…PGFL, NTLA…DIFA, MVLP…GLAF, GITP…IFVI, IAGF…APPV, ISIF…ITFA, VVGI…VLGV, IFGL…AYTS, GIII…GQPA, ILVL…GTLL, and PLWL…MGIY.

It belongs to the NRAMP family.

Its subcellular location is the cell membrane. This is an uncharacterized protein from Bacillus subtilis (strain 168).